The sequence spans 248 residues: tRNA pseudouridine synthase A (248 aa).

The Nucleophile role is filled by Asp-53. Tyr-111 lines the substrate pocket.

Belongs to the tRNA pseudouridine synthase TruA family. In terms of assembly, homodimer.

It carries out the reaction uridine(38/39/40) in tRNA = pseudouridine(38/39/40) in tRNA. Functionally, formation of pseudouridine at positions 38, 39 and 40 in the anticodon stem and loop of transfer RNAs. The polypeptide is tRNA pseudouridine synthase A (Streptococcus thermophilus (strain CNRZ 1066)).